The primary structure comprises 131 residues: Glycine cleavage system H protein (131 aa).

The region spanning 24–106 is the Lipoyl-binding domain; sequence TVRVGITDYA…YGEGWLVELQ (83 aa). Position 65 is an N6-lipoyllysine (lysine 65).

Belongs to the GcvH family. As to quaternary structure, the glycine cleavage system is composed of four proteins: P, T, L and H. It depends on (R)-lipoate as a cofactor.

The glycine cleavage system catalyzes the degradation of glycine. The H protein shuttles the methylamine group of glycine from the P protein to the T protein. The protein is Glycine cleavage system H protein of Mycolicibacterium vanbaalenii (strain DSM 7251 / JCM 13017 / BCRC 16820 / KCTC 9966 / NRRL B-24157 / PYR-1) (Mycobacterium vanbaalenii).